A 368-amino-acid polypeptide reads, in one-letter code: MSSPSKKLLANVRRIVPPMLERFHKGQLGRVAVIGGSAECAPHISLQWHLQGLSHVICEPSSATVIKSYSPNLMVHPILQSSNTVSSFSNSPLPHPHARALAEPVLSFLSRLHVLVIGPGLGRDPVTQEIVTEIIKEARSREIPLVLDADALLLVQEHPDLIHGYTECILTPNVVEFARLAKALRADVSSMPDSDAGKSEACKRLSNALGGVTIIQKGPHDTISNGMVNIVCDVRGGLKRSGGQGDTLTGSLGTLLAWRKAYHEGLWDTGESEASGGRELSRQDIEEDLSICGYESGDDGERDGDKPKKKLSRPATLLLVAWAGSAITRECSRRAFMAKGRSMQASDLTDEVHGSFLDLIGEPEGTKL.

One can recognise a YjeF C-terminal domain in the interval 3–359 (SPSKKLLANV…DEVHGSFLDL (357 aa)). (6S)-NADPHX contacts are provided by residues glycine 120 and 173–179 (NVVEFAR). ATP is bound by residues 217–221 (KGPHD) and 236–245 (GGLKRSGGQG). Aspartate 246 provides a ligand contact to (6S)-NADPHX.

This sequence belongs to the NnrD/CARKD family. It depends on Mg(2+) as a cofactor.

The protein resides in the cytoplasm. It catalyses the reaction (6S)-NADHX + ATP = ADP + phosphate + NADH + H(+). It carries out the reaction (6S)-NADPHX + ATP = ADP + phosphate + NADPH + H(+). Functionally, catalyzes the dehydration of the S-form of NAD(P)HX at the expense of ATP, which is converted to ADP. Together with NAD(P)HX epimerase, which catalyzes the epimerization of the S- and R-forms, the enzyme allows the repair of both epimers of NAD(P)HX, a damaged form of NAD(P)H that is a result of enzymatic or heat-dependent hydration. The sequence is that of ATP-dependent (S)-NAD(P)H-hydrate dehydratase from Ajellomyces capsulatus (strain G186AR / H82 / ATCC MYA-2454 / RMSCC 2432) (Darling's disease fungus).